The chain runs to 603 residues: ADP-ribosylation factor-binding protein GGA2 (603 aa).

The tract at residues 1–22 (MAATAVAAGTGSPAGTESAEGG) is disordered. The segment covering 13 to 22 (PAGTESAEGG) has biased composition (low complexity). The VHS domain maps to 36–166 (ATDPSMAEQD…MLKKQGIIKQ (131 aa)). Positions 190–317 (DEEKSKLLTR…GVRLYKQVVE (128 aa)) constitute a GAT domain. The interval 318–473 (GRVSAGNAVP…VFVPLESVKP (156 aa)) is unstructured hinge. The 122-residue stretch at 474–595 (SSLPPIVVYD…SEVGEVKDFP (122 aa)) folds into the GAE domain.

Belongs to the GGA protein family. In terms of assembly, monomer. Interacts with NECAP1, TSG101, UBC and AFTPH/aftiphilin. Interacts with CNST. Interacts with GGA1 and GGA3. Binds to clathrin and activated ARFs, such as ARF1, ARF5 and ARF6. Binds RABEP1 and RABGEF1. Interacts with the type-I membrane proteins LRP3, M6PR/CD-MPR, IGF2R/CI-MPR and BACE1. Interacts (via N-terminal VHS domain) with SORL1/sorLA and SORT1 (via C-terminal cytosolic domain). Binds the accessory proteins CCDC91, P200, SYNRG, EPN4 and NECAP2. Interacts with ADRA2B. Interacts (via VHS domain) with PIK4B; the interaction is important for PIK4B location at the Golgi apparatus membrane. Post-translationally, ubiquitinated.

Its subcellular location is the golgi apparatus. The protein resides in the trans-Golgi network membrane. It localises to the endosome membrane. The protein localises to the early endosome membrane. In terms of biological role, plays a role in protein sorting and trafficking between the trans-Golgi network (TGN) and endosomes. Mediates the ARF-dependent recruitment of clathrin to the TGN and binds ubiquitinated proteins and membrane cargo molecules with a cytosolic acidic cluster-dileucine (DXXLL) motif. Mediates export of the GPCR receptor ADRA2B to the cell surface. Regulates retrograde transport of phosphorylated form of BACE1 from endosomes to the trans-Golgi network. This is ADP-ribosylation factor-binding protein GGA2 (Gga2) from Mus musculus (Mouse).